We begin with the raw amino-acid sequence, 204 residues long: Proteasome subunit beta type-3 (204 aa).

The protein belongs to the peptidase T1B family. As to quaternary structure, the 26S proteasome consists of a 20S proteasome core and two 19S regulatory subunits. The 20S proteasome core is composed of 28 subunits that are arranged in four stacked rings, resulting in a barrel-shaped structure. The two end rings are each formed by seven alpha subunits, and the two central rings are each formed by seven beta subunits. The catalytic chamber with the active sites is on the inside of the barrel.

The protein localises to the cytoplasm. The protein resides in the nucleus. Non-catalytic component of the proteasome, a multicatalytic proteinase complex which is characterized by its ability to cleave peptides with Arg, Phe, Tyr, Leu, and Glu adjacent to the leaving group at neutral or slightly basic pH. The proteasome has an ATP-dependent proteolytic activity. This Oryza sativa subsp. japonica (Rice) protein is Proteasome subunit beta type-3 (PBC1).